The following is a 391-amino-acid chain: Chaperone protein DnaJ (391 aa).

The region spanning 6–70 (DYYEILEVSR…EKRKLYDTYG (65 aa)) is the J domain. The CR-type zinc-finger motif lies at 145–226 (GCIKNVKYTR…CKSRRMVDEV (82 aa)). Zn(2+) is bound by residues Cys158, Cys161, Cys174, Cys177, Cys200, Cys203, Cys214, and Cys217. CXXCXGXG motif repeat units follow at residues 158 to 165 (CPDCNGSG), 174 to 181 (CSDCNGEG), 200 to 207 (CPSCKGEG), and 214 to 221 (CKKCKSRR).

Belongs to the DnaJ family. In terms of assembly, homodimer. The cofactor is Zn(2+).

Its subcellular location is the cytoplasm. In terms of biological role, participates actively in the response to hyperosmotic and heat shock by preventing the aggregation of stress-denatured proteins and by disaggregating proteins, also in an autonomous, DnaK-independent fashion. Unfolded proteins bind initially to DnaJ; upon interaction with the DnaJ-bound protein, DnaK hydrolyzes its bound ATP, resulting in the formation of a stable complex. GrpE releases ADP from DnaK; ATP binding to DnaK triggers the release of the substrate protein, thus completing the reaction cycle. Several rounds of ATP-dependent interactions between DnaJ, DnaK and GrpE are required for fully efficient folding. Also involved, together with DnaK and GrpE, in the DNA replication of plasmids through activation of initiation proteins. In Mycoplasmoides gallisepticum (strain R(low / passage 15 / clone 2)) (Mycoplasma gallisepticum), this protein is Chaperone protein DnaJ.